Consider the following 404-residue polypeptide: SL1278 acyltransferase Chp1 (404 aa).

Residues 1–42 lie on the Periplasmic side of the membrane; sequence MKCPGVSDCVATVRHDNVFAIAAGLRWSAAVPPLHKGDAVTK. A helical transmembrane segment spans residues 43 to 63; that stretch reads LLVGAIAGGMLACAAILGDGI. At 64–404 the chain is on the cytoplasmic side; sequence ASADTALIVP…RGLLPKGKKH (341 aa). One can recognise a PE-PPE domain in the interval 104–325; the sequence is PTATRHVVSY…LRPIIDRAYQ (222 aa).

This sequence belongs to the mycobacterial PPE family.

The protein localises to the cell inner membrane. It carries out the reaction 3 3'-(hydroxy)phthioceranyl-2'-palmitoyl(stearoyl)-2-O-sulfo-alpha,alpha-trehalose = 3,6,6'-tris-(hydroxy)phthioceranyl-2-palmitoyl(stearoyl)-2'-sulfo-alpha-alpha-trehalose + 2 2'-palmitoyl/stearoyl-2-O-sulfo-alpha,alpha-trehalose.. With respect to regulation, activity is potentiated by the SL-1 transporter MmpL8. Inhibited by the lipase inhibitor tetrahydrolipstatin (THL). Its function is as follows. Involved in the final steps of the cell wall sulfolipid-1 (SL-1) biosynthesis. Catalyzes two successive acylations of the precursor 2-palmitoyl-3-(C43)-phthioceranyl-alpha, alpha'-D-trehalose-2'-sulfate (SL1278) to yield the tetraacylated sulfolipid SL-1. This chain is SL1278 acyltransferase Chp1, found in Mycobacterium tuberculosis (strain ATCC 25618 / H37Rv).